The chain runs to 89 residues: Small ribosomal subunit protein uS15 (89 aa).

The protein belongs to the universal ribosomal protein uS15 family. As to quaternary structure, part of the 30S ribosomal subunit. Forms a bridge to the 50S subunit in the 70S ribosome, contacting the 23S rRNA.

In terms of biological role, one of the primary rRNA binding proteins, it binds directly to 16S rRNA where it helps nucleate assembly of the platform of the 30S subunit by binding and bridging several RNA helices of the 16S rRNA. Its function is as follows. Forms an intersubunit bridge (bridge B4) with the 23S rRNA of the 50S subunit in the ribosome. The polypeptide is Small ribosomal subunit protein uS15 (Oceanobacillus iheyensis (strain DSM 14371 / CIP 107618 / JCM 11309 / KCTC 3954 / HTE831)).